We begin with the raw amino-acid sequence, 725 residues long: A-agglutinin anchorage subunit (725 aa).

The N-terminal stretch at Met1 to Ala24 is a signal peptide. 19 tandem repeats follow at residues Val53 to Thr149, Thr182 to Ser188, Thr189 to Ser195, Thr196 to Ser202, Thr203 to Ser209, Thr210 to Ser216, Thr217 to Ser223, Thr224 to Ser230, Thr231 to Leu237, Thr238 to Ser244, Thr245 to Ser251, Thr252 to Ser258, Thr259 to Ser265, Thr266 to Ser272, Thr273 to Ser279, Lys280 to Ser286, Thr287 to Ser293, Thr294 to Leu300, and Thr301 to Leu307. A 2 X approximate repeats region spans residues Val53–Thr493. Disordered stretches follow at residues Pro168 to Ser318 and Ser335 to Met363. Positions Thr182–Leu307 are 18 X approximate tandem repeats, Ser/Thr-rich. A 1-2 repeat occupies Met395–Thr493. Gly699 is lipidated: GPI-anchor amidated glycine. Residues Ser700–Ser725 constitute a propeptide, removed in mature form.

Heterodimer; disulfide-linked. Post-translationally, extensively O-glycosylated by PMT1 and PMT2. The GPI-anchor is attached to the protein in the endoplasmic reticulum and serves to target the protein to the cell surface. There, the glucosamine-inositol phospholipid moiety is cleaved off and the GPI-modified mannoprotein is covalently attached via its lipidless GPI glycan remnant to the 1,6-beta-glucan of the outer cell wall layer.

It localises to the secreted. The protein localises to the cell wall. It is found in the membrane. Its function is as follows. Cell wall anchoring subunit of the a-agglutinin heterodimer. S.cerevisiae a and alpha cells express the complementary cell surface glycoproteins a-agglutinin and alpha-agglutinin, respectively, which interact with one another to promote cellular aggregation during mating. This Saccharomyces cerevisiae (strain ATCC 204508 / S288c) (Baker's yeast) protein is A-agglutinin anchorage subunit (AGA1).